The following is a 991-amino-acid chain: Adhesion G-protein coupled receptor F3 (991 aa).

The N-terminal stretch at 1–20 (MSSLALSQLLLAVTLPLLEL) is a signal peptide. Topologically, residues 21 to 694 (EPTFVPTAQS…ENPTLDLLSQ (674 aa)) are extracellular. N-linked (GlcNAc...) asparagine glycosylation is found at asparagine 75, asparagine 102, asparagine 118, asparagine 321, asparagine 362, asparagine 484, asparagine 571, asparagine 589, asparagine 630, and asparagine 660. Residues 519 to 684 (HPFSFSSANV…SILMSQHTVP (166 aa)) form the GAIN-B domain. 2 disulfide bridges follow: cysteine 635/cysteine 666 and cysteine 654/cysteine 668. The GPS stretch occupies residues 635–684 (CVFWDHRVFQGQGGWSDEGCEVHAANASITQCICQHLTAFSILMSQHTVP). The helical transmembrane segment at 695 to 715 (VGTGASVLALLVCLAIYGLVW) threads the bilayer. At 716-730 (RVVVRNKVAFFRHTT) the chain is on the cytoplasmic side. Residues 731–751 (LFNMVICLLVADTCFLGSPFL) form a helical membrane-spanning segment. At 752–757 (PSGYHS) the chain is on the extracellular side. Residues 758–778 (LICLVTAFLCHFFYLATFFWM) traverse the membrane as a helical segment. Over 779-799 (LAQALVLAHQLLFVFHQLSKH) the chain is Cytoplasmic. Residues 800 to 820 (VVLSLMVMLGYLCPLGFAGVT) traverse the membrane as a helical segment. The Extracellular segment spans residues 821–850 (LGLYLPQRKYLWEGKCFLNGGGVMLYSFSE). The chain crosses the membrane as a helical span at residues 851–871 (PVLAIVGVNGLVLVIAVLKLL). The Cytoplasmic portion of the chain corresponds to 872–892 (RPSLSEGPTVEKRQALVGVLK). The chain crosses the membrane as a helical span at residues 893-913 (ALLILTPIFGLTWGLGVATLF). Residues 914–916 (DGS) lie on the Extracellular side of the membrane. The chain crosses the membrane as a helical span at residues 917-937 (IVSHYAFSILNSLQGVFILVF). At 938–991 (GCLTDKKVLEALRKRLRGSRSSNSAISMVTNETYTSEHSKERSEPASYEERMTD) the chain is on the cytoplasmic side. Residues 964–991 (SMVTNETYTSEHSKERSEPASYEERMTD) form a disordered region. Basic and acidic residues predominate over residues 972–991 (TSEHSKERSEPASYEERMTD).

Belongs to the G-protein coupled receptor 2 family. Adhesion G-protein coupled receptor (ADGR) subfamily. In terms of assembly, heterodimer of 2 chains generated by proteolytic processing; the large extracellular N-terminal fragment and the membrane-bound C-terminal fragment predominantly remain associated and non-covalently linked. Post-translationally, autoproteolytically processed at the GPS region of the GAIN-B domain; this cleavage modulates receptor activity. In terms of tissue distribution, expression is restricted to testis and circumvallate papillae.

It localises to the membrane. In terms of biological role, orphan receptor. This Mus musculus (Mouse) protein is Adhesion G-protein coupled receptor F3 (ADGRF3).